A 272-amino-acid polypeptide reads, in one-letter code: Putative pyruvate, phosphate dikinase regulatory protein (272 aa).

Residue 151–158 coordinates ADP; that stretch reads GISRTSKT.

This sequence belongs to the pyruvate, phosphate/water dikinase regulatory protein family. PDRP subfamily.

The enzyme catalyses N(tele)-phospho-L-histidyl/L-threonyl-[pyruvate, phosphate dikinase] + ADP = N(tele)-phospho-L-histidyl/O-phospho-L-threonyl-[pyruvate, phosphate dikinase] + AMP + H(+). It catalyses the reaction N(tele)-phospho-L-histidyl/O-phospho-L-threonyl-[pyruvate, phosphate dikinase] + phosphate + H(+) = N(tele)-phospho-L-histidyl/L-threonyl-[pyruvate, phosphate dikinase] + diphosphate. Bifunctional serine/threonine kinase and phosphorylase involved in the regulation of the pyruvate, phosphate dikinase (PPDK) by catalyzing its phosphorylation/dephosphorylation. This is Putative pyruvate, phosphate dikinase regulatory protein from Staphylococcus aureus (strain USA300).